We begin with the raw amino-acid sequence, 559 residues long: Chaperonin GroEL 1 (559 aa).

ATP is bound by residues 29-32 (TIGP), 86-90 (DGTTT), Gly-413, 476-478 (NAL), and Asp-492. The segment at 521–541 (KPEPPAPAPAGDGDPMGGMGG) is disordered.

This sequence belongs to the chaperonin (HSP60) family. In terms of assembly, forms a cylinder of 14 subunits composed of two heptameric rings stacked back-to-back. Interacts with the co-chaperonin GroES.

The protein localises to the cytoplasm. It catalyses the reaction ATP + H2O + a folded polypeptide = ADP + phosphate + an unfolded polypeptide.. Together with its co-chaperonin GroES, plays an essential role in assisting protein folding. The GroEL-GroES system forms a nano-cage that allows encapsulation of the non-native substrate proteins and provides a physical environment optimized to promote and accelerate protein folding. The chain is Chaperonin GroEL 1 from Synechococcus sp. (strain CC9605).